A 127-amino-acid polypeptide reads, in one-letter code: Large ribosomal subunit protein bL12 (127 aa).

This sequence belongs to the bacterial ribosomal protein bL12 family. In terms of assembly, homodimer. Part of the ribosomal stalk of the 50S ribosomal subunit. Forms a multimeric L10(L12)X complex, where L10 forms an elongated spine to which 2 to 4 L12 dimers bind in a sequential fashion. Binds GTP-bound translation factors.

In terms of biological role, forms part of the ribosomal stalk which helps the ribosome interact with GTP-bound translation factors. Is thus essential for accurate translation. This is Large ribosomal subunit protein bL12 from Clavibacter michiganensis subsp. michiganensis (strain NCPPB 382).